A 94-amino-acid polypeptide reads, in one-letter code: Pyrimidine/purine nucleoside phosphorylase (94 aa).

Belongs to the nucleoside phosphorylase PpnP family.

The catalysed reaction is a purine D-ribonucleoside + phosphate = a purine nucleobase + alpha-D-ribose 1-phosphate. The enzyme catalyses adenosine + phosphate = alpha-D-ribose 1-phosphate + adenine. It carries out the reaction cytidine + phosphate = cytosine + alpha-D-ribose 1-phosphate. It catalyses the reaction guanosine + phosphate = alpha-D-ribose 1-phosphate + guanine. The catalysed reaction is inosine + phosphate = alpha-D-ribose 1-phosphate + hypoxanthine. The enzyme catalyses thymidine + phosphate = 2-deoxy-alpha-D-ribose 1-phosphate + thymine. It carries out the reaction uridine + phosphate = alpha-D-ribose 1-phosphate + uracil. It catalyses the reaction xanthosine + phosphate = alpha-D-ribose 1-phosphate + xanthine. Functionally, catalyzes the phosphorolysis of diverse nucleosides, yielding D-ribose 1-phosphate and the respective free bases. Can use uridine, adenosine, guanosine, cytidine, thymidine, inosine and xanthosine as substrates. Also catalyzes the reverse reactions. This Salmonella arizonae (strain ATCC BAA-731 / CDC346-86 / RSK2980) protein is Pyrimidine/purine nucleoside phosphorylase.